We begin with the raw amino-acid sequence, 143 residues long: Nucleoside diphosphate kinase (143 aa).

ATP contacts are provided by K11, F59, R87, T93, R104, and N114. Residue H117 is the Pros-phosphohistidine intermediate of the active site.

This sequence belongs to the NDK family. As to quaternary structure, homotetramer. Requires Mg(2+) as cofactor.

The protein resides in the cytoplasm. The catalysed reaction is a 2'-deoxyribonucleoside 5'-diphosphate + ATP = a 2'-deoxyribonucleoside 5'-triphosphate + ADP. It carries out the reaction a ribonucleoside 5'-diphosphate + ATP = a ribonucleoside 5'-triphosphate + ADP. In terms of biological role, major role in the synthesis of nucleoside triphosphates other than ATP. The ATP gamma phosphate is transferred to the NDP beta phosphate via a ping-pong mechanism, using a phosphorylated active-site intermediate. In Salmonella agona (strain SL483), this protein is Nucleoside diphosphate kinase.